A 101-amino-acid polypeptide reads, in one-letter code: Small ribosomal subunit protein uS10 (101 aa).

It belongs to the universal ribosomal protein uS10 family. As to quaternary structure, part of the 30S ribosomal subunit.

In terms of biological role, involved in the binding of tRNA to the ribosomes. This Brachyspira hyodysenteriae (Treponema hyodysenteriae) protein is Small ribosomal subunit protein uS10.